The following is a 742-amino-acid chain: Protein-lysine N-methyltransferase SMYD4 (742 aa).

Residue 110–112 participates in S-adenosyl-L-methionine binding; it reads RSA. An SET domain is found at 230–569; it reads SSLSLNFSTE…SGQEIFHCYG (340 aa). Residues Cys295, Cys298, Cys308, Cys311, Cys317, Cys321, His330, and Cys334 each coordinate Zn(2+). The MYND-type zinc-finger motif lies at 295-334; the sequence is CHHCLKQLLASIPCCGCSYAKYCSQNCADVAWEQYHRTEC. Residues Asn418, 534 to 535, and Tyr568 contribute to the S-adenosyl-L-methionine site; that span reads NH.

This sequence belongs to the class V-like SAM-binding methyltransferase superfamily.

It is found in the nucleus. Its subcellular location is the cytoplasm. The catalysed reaction is L-lysyl-[protein] + S-adenosyl-L-methionine = N(6)-methyl-L-lysyl-[protein] + S-adenosyl-L-homocysteine + H(+). In terms of biological role, protein-lysine N-methyltransferase. Monomethylates PRMT5, modulating its transcriptional activity. May also act as a histone methyltransferase. Plays a critical role in cardiac development. Acts as a key epigenetic regulator of gene expression during cardiac development via its dual activities as a methyltransferase and negative regulator of HDAC1. This Gallus gallus (Chicken) protein is Protein-lysine N-methyltransferase SMYD4 (SMYD4).